A 579-amino-acid chain; its full sequence is Alpha-longipinene synthase (579 aa).

Residues D332, D336, D476, and N484 each coordinate Mg(2+). Positions 332-336 (DDLYD) match the DDXXD motif motif.

Belongs to the terpene synthase family. Tpsd subfamily. It depends on Mg(2+) as a cofactor. Requires Mn(2+) as cofactor.

It catalyses the reaction (2E,6E)-farnesyl diphosphate = alpha-longipinene + diphosphate. It functions in the pathway sesquiterpene biosynthesis. The protein operates within terpene metabolism; oleoresin biosynthesis. Its function is as follows. Terpene synthase (TPS) involved in the biosynthesis of sesquiterpene natural products included in conifer oleoresin secretions and volatile emissions; these compounds contribute to biotic and abiotic stress defense against herbivores and pathogens. Catalyzes the conversion of (2E,6E)-farnesyl diphosphate (FPP) to alpha-longipinene. The protein is Alpha-longipinene synthase of Picea sitchensis (Sitka spruce).